We begin with the raw amino-acid sequence, 267 residues long: MLTYPDIDPVAIALGPFKVHWYGLMYVVGFVGAWWLGRRRADRLGVQPDAIGDLLFYGALGVVLGGRVGYALFYGFERLAADPLWIFQVWDGGMSFHGGLIGVLIAAWLFARKHRLAFFQLTDFVAPLVPLGLGAGRIGNFINHELPGRVTDVPWALVYPGLGPEGRHPSPLYEFALEGVVMFVVLWWVSSRPRRRGMISGLFLLLYAVFRFSVEFVRRPDPQLGFIAFDWLTMGQLLTVPMALAGIALCVWSRRQPVDDARMQAAT.

4 helical membrane passes run 10 to 30 (VAIA…VVGF), 54 to 74 (LLFY…ALFY), 90 to 110 (WDGG…AWLF), and 116 to 136 (LAFF…LGAG). Position 137 (arginine 137) interacts with a 1,2-diacyl-sn-glycero-3-phospho-(1'-sn-glycerol). 3 helical membrane passes run 169–189 (PSPL…LWWV), 197–217 (GMIS…VEFV), and 231–251 (WLTM…ALCV).

Belongs to the Lgt family.

It localises to the cell inner membrane. It carries out the reaction L-cysteinyl-[prolipoprotein] + a 1,2-diacyl-sn-glycero-3-phospho-(1'-sn-glycerol) = an S-1,2-diacyl-sn-glyceryl-L-cysteinyl-[prolipoprotein] + sn-glycerol 1-phosphate + H(+). Its pathway is protein modification; lipoprotein biosynthesis (diacylglyceryl transfer). Its function is as follows. Catalyzes the transfer of the diacylglyceryl group from phosphatidylglycerol to the sulfhydryl group of the N-terminal cysteine of a prolipoprotein, the first step in the formation of mature lipoproteins. This chain is Phosphatidylglycerol--prolipoprotein diacylglyceryl transferase, found in Chromohalobacter salexigens (strain ATCC BAA-138 / DSM 3043 / CIP 106854 / NCIMB 13768 / 1H11).